Consider the following 124-residue polypeptide: Small ribosomal subunit protein bS6 (124 aa).

Belongs to the bacterial ribosomal protein bS6 family.

Its function is as follows. Binds together with bS18 to 16S ribosomal RNA. This is Small ribosomal subunit protein bS6 from Actinobacillus pleuropneumoniae serotype 7 (strain AP76).